The following is a 157-amino-acid chain: Urease accessory protein UreE (157 aa).

It belongs to the UreE family.

The protein localises to the cytoplasm. Functionally, involved in urease metallocenter assembly. Binds nickel. Probably functions as a nickel donor during metallocenter assembly. This chain is Urease accessory protein UreE, found in Corynebacterium glutamicum (strain R).